Consider the following 117-residue polypeptide: uncharacterized protein (117 aa).

The chain crosses the membrane as a helical span at residues 76-96; sequence FIMSSGCFLIASLSCVGLTVF.

Its subcellular location is the membrane. This is an uncharacterized protein from Saccharomyces cerevisiae (strain ATCC 204508 / S288c) (Baker's yeast).